Here is a 318-residue protein sequence, read N- to C-terminus: N-acetyl-gamma-glutamyl-phosphate reductase (318 aa).

Cysteine 132 is a catalytic residue.

This sequence belongs to the NAGSA dehydrogenase family. Type 1 subfamily.

It is found in the cytoplasm. It catalyses the reaction N-acetyl-L-glutamate 5-semialdehyde + phosphate + NADP(+) = N-acetyl-L-glutamyl 5-phosphate + NADPH + H(+). It functions in the pathway amino-acid biosynthesis; L-arginine biosynthesis; N(2)-acetyl-L-ornithine from L-glutamate: step 3/4. In terms of biological role, catalyzes the NADPH-dependent reduction of N-acetyl-5-glutamyl phosphate to yield N-acetyl-L-glutamate 5-semialdehyde. The sequence is that of N-acetyl-gamma-glutamyl-phosphate reductase from Azobacteroides pseudotrichonymphae genomovar. CFP2.